The sequence spans 708 residues: Putative adhesion G protein-coupled receptor F2P (708 aa).

Topologically, residues 1-451 (MGLTAYGNRR…ESLILTYITY (451 aa)) are extracellular. Residues Asn21, Asn220, Asn252, Asn260, Asn305, Asn313, and Asn358 are each glycosylated (N-linked (GlcNAc...) asparagine). One can recognise a GAIN-B domain in the interval 293–442 (MGTTISGDNI…SILMSPHILE (150 aa)). Intrachain disulfides connect Cys394–Cys421 and Cys409–Cys423. The segment at 394-442 (CVGWHSVENRWDQQACKMIQENSQQAVCKCRPSKLFTSFSILMSPHILE) is GPS. The helical transmembrane segment at 452–472 (VGLGISICSLILCLSIEVLVW) threads the bilayer. The Cytoplasmic segment spans residues 473 to 487 (SQVTKTEITYLRHVC). A helical transmembrane segment spans residues 488 to 508 (IVNIAATLLMADVWFIVASFL). The Extracellular segment spans residues 509–530 (SGPITHHKGCVAATFFVHFFYL). A helical transmembrane segment spans residues 531-551 (SVFFWMLAKALLILYGIMIVF). The Cytoplasmic segment spans residues 552 to 557 (HTLPKS). A helical transmembrane segment spans residues 558-578 (VLVASLFSVGYGCPLAIAAIT). Topologically, residues 579–606 (VAATEPGKGYLRPEICWLNWDMTKALLA) are extracellular. The helical transmembrane segment at 607-627 (FVIPALAIVVVNLITVTLVIV) threads the bilayer. Residues 628–650 (KTQRAAIGNSMFQEVRAIVRISK) are Cytoplasmic-facing. A helical transmembrane segment spans residues 651-671 (NIAILTPLLGLTWGFGVATVI). The Extracellular segment spans residues 672–674 (DDR). Residues 675 to 695 (SLAFHIIFSLLNAFQVSPDAS) form a helical membrane-spanning segment. Residues 696-708 (DQVQSERIHEDVL) lie on the Cytoplasmic side of the membrane.

This sequence belongs to the G-protein coupled receptor 2 family. Adhesion G-protein coupled receptor (ADGR) subfamily. High expression in kidney. Up-regulated in lung adenocarcinomas and prostate cancers.

Its subcellular location is the membrane. Orphan receptor. The polypeptide is Putative adhesion G protein-coupled receptor F2P (Homo sapiens (Human)).